Here is a 1381-residue protein sequence, read N- to C-terminus: Hepatocyte growth factor receptor (1381 aa).

Positions 1-24 are cleaved as a signal peptide; that stretch reads MKAPAVLAPGILVLLFTLVQRSNG. At 25–934 the chain is on the extracellular side; it reads ECKEALTKSE…VQPDQNFTGL (910 aa). Residues 27-515 enclose the Sema domain; it reads KEALTKSEMN…TGKKITKIPL (489 aa). An N-linked (GlcNAc...) asparagine glycan is attached at Asn45. Disulfide bonds link Cys95–Cys101, Cys98–Cys160, Cys133–Cys141, and Cys172–Cys175. Asn106 is a glycosylation site (N-linked (GlcNAc...) asparagine). N-linked (GlcNAc...) asparagine glycosylation occurs at Asn149. Asn202 carries N-linked (GlcNAc...) asparagine glycosylation. Cystine bridges form between Cys298/Cys363 and Cys385/Cys397. N-linked (GlcNAc...) asparagine glycosylation is present at Asn399. 4 disulfide bridges follow: Cys520–Cys538, Cys526–Cys561, Cys529–Cys545, and Cys541–Cys551. IPT/TIG domains follow at residues 563-655, 657-739, and 742-836; these read PTIY…FSYV, PIIT…FSYR, and PIVY…LIYV. An O-linked (Man) threonine glycan is attached at Thr582. N-linked (GlcNAc...) asparagine glycans are attached at residues Asn607 and Asn635. 2 O-linked (Man) threonine glycosylation sites follow: Thr676 and Thr761. N-linked (GlcNAc...) asparagine glycans are attached at residues Asn785, Asn879, and Asn930. The helical transmembrane segment at 935–955 threads the bilayer; sequence VAGVVSISIALLLLLGLFLWL. The Cytoplasmic segment spans residues 956-1381; that stretch reads KKKKQIKDLG…QDNTDGEVDT (426 aa). Ser966 is subject to Phosphoserine. Thr977 is subject to Phosphothreonine. 3 positions are modified to phosphoserine: Ser990, Ser997, and Ser1000. Tyr1003 carries the post-translational modification Phosphotyrosine. Positions 1078 to 1345 constitute a Protein kinase domain; sequence VHFNEVIGRG…RISAIFSTFI (268 aa). Residues 1084-1092 and Lys1110 each bind ATP; that span reads IGRGHFGCV. Asp1204 functions as the Proton acceptor in the catalytic mechanism. Residues 1212-1381 form an interaction with RANBP9 region; the sequence is LDEKFTVKVA…QDNTDGEVDT (170 aa). Phosphotyrosine is present on Tyr1230. A phosphotyrosine; by autocatalysis mark is found at Tyr1234 and Tyr1235. Thr1289 is modified (phosphothreonine). An interaction with MUC20 region spans residues 1320 to 1359; sequence WHPKAEMRPSFSELVSRISAIFSTFIGEHYVHVNATYVNV. Phosphotyrosine; by autocatalysis is present on residues Tyr1349 and Tyr1356. Residue Tyr1365 is modified to Phosphotyrosine.

It belongs to the protein kinase superfamily. Tyr protein kinase family. Heterodimer made of an alpha chain (50 kDa) and a beta chain (145 kDa) which are disulfide linked. Binds PLXNB1. Interacts when phosphorylated with downstream effectors including STAT3, PIK3R1, SRC, PCLG1, GRB2 and GAB1. Interacts with SPSB1, SPSB2 and SPSB4. Interacts with INPP5D/SHIP1. When phosphorylated at Tyr-1356, interacts with INPPL1/SHIP2. Interacts with RANBP9 and RANBP10, as well as SPSB1, SPSB2, SPSB3 and SPSB4. SPSB1 binding occurs in the presence and in the absence of HGF, however HGF treatment has a positive effect on this interaction. Interacts with MUC20; prevents interaction with GRB2 and suppresses hepatocyte growth factor-induced cell proliferation. Interacts with GRB10. Interacts with PTPN1 and PTPN2. Interacts with HSP90AA1 and HSP90AB1; the interaction suppresses MET kinase activity. Interacts with tensin TNS3. Interacts (when phosphorylated) with tensin TNS4 (via SH2 domain); the interaction increases MET protein stability by inhibiting MET endocytosis and subsequent lysosomal degradation. Post-translationally, autophosphorylated in response to ligand binding on Tyr-1234 and Tyr-1235 in the kinase domain leading to further phosphorylation of Tyr-1349 and Tyr-1356 in the C-terminal multifunctional docking site. Dephosphorylated by PTPRJ at Tyr-1349 and Tyr-1365. Dephosphorylated by PTPN1 and PTPN2. In terms of processing, ubiquitinated. Ubiquitination by CBL regulates the receptor stability and activity through proteasomal degradation. O-mannosylation of IPT/TIG domains by TMEM260 is required for protein maturation. O-mannosylated residues are composed of single mannose glycans that are not elongated or modified.

The protein resides in the membrane. The enzyme catalyses L-tyrosyl-[protein] + ATP = O-phospho-L-tyrosyl-[protein] + ADP + H(+). Functionally, receptor tyrosine kinase that transduces signals from the extracellular matrix into the cytoplasm by binding to hepatocyte growth factor/HGF ligand. Regulates many physiological processes including proliferation, scattering, morphogenesis and survival. Ligand binding at the cell surface induces autophosphorylation of MET on its intracellular domain that provides docking sites for downstream signaling molecules. Following activation by ligand, interacts with the PI3-kinase subunit PIK3R1, PLCG1, SRC, GRB2, STAT3 or the adapter GAB1. Recruitment of these downstream effectors by MET leads to the activation of several signaling cascades including the RAS-ERK, PI3 kinase-AKT, or PLCgamma-PKC. The RAS-ERK activation is associated with the morphogenetic effects while PI3K/AKT coordinates prosurvival effects. During embryonic development, MET signaling plays a role in gastrulation, development and migration of muscles and neuronal precursors, angiogenesis and kidney formation. In adults, participates in wound healing as well as organ regeneration and tissue remodeling. Also promotes differentiation and proliferation of hematopoietic cells. The protein is Hepatocyte growth factor receptor (MET) of Callithrix jacchus (White-tufted-ear marmoset).